Here is a 339-residue protein sequence, read N- to C-terminus: Ribosomal RNA small subunit methyltransferase H (339 aa).

Residues 44–46, Asp-61, Phe-88, Asp-105, and Gln-112 each bind S-adenosyl-L-methionine; that span reads GGY. The tract at residues 263–312 is disordered; the sequence is PQAQSRHLPEKAAAQPVFEKPMKPVSPGEAETAENPRARSAHLRAARRTA. Residues 301 to 312 are compositionally biased toward basic residues; that stretch reads RSAHLRAARRTA.

It belongs to the methyltransferase superfamily. RsmH family.

It localises to the cytoplasm. It catalyses the reaction cytidine(1402) in 16S rRNA + S-adenosyl-L-methionine = N(4)-methylcytidine(1402) in 16S rRNA + S-adenosyl-L-homocysteine + H(+). Functionally, specifically methylates the N4 position of cytidine in position 1402 (C1402) of 16S rRNA. In Chelativorans sp. (strain BNC1), this protein is Ribosomal RNA small subunit methyltransferase H.